The primary structure comprises 515 residues: Pescadillo homolog (515 aa).

Residues 270–327 (EVLAALNHTLKIIQTQEEDLEVDEFPIDPNSEDAEAIQAQKEEETKLERLKNLFSECK) adopt a coiled-coil conformation. The BRCT domain occupies 318-411 (RLKNLFSECK…KLLPVEEYFP (94 aa)). The segment at 477-515 (RLYEKIMHSKKKKRSEVRKLESKRKVHDEEKAKKKLKSS) is disordered. Residues 484 to 501 (HSKKKKRSEVRKLESKRK) show a composition bias toward basic residues.

Belongs to the pescadillo family.

It is found in the nucleus. The protein resides in the nucleolus. It localises to the nucleoplasm. In terms of biological role, required for maturation of ribosomal RNAs and formation of the large ribosomal subunit. In Nematostella vectensis (Starlet sea anemone), this protein is Pescadillo homolog.